The following is a 388-amino-acid chain: Flap endonuclease 1 (388 aa).

Residues 1 to 104 (MGILGLSKLI…GELAKRAERR (104 aa)) are N-domain. Position 34 (aspartate 34) interacts with Mg(2+). DNA is bound by residues arginine 47 and arginine 70. Mg(2+)-binding residues include aspartate 86, glutamate 158, glutamate 160, aspartate 179, and aspartate 181. Residues 122-253 (EIEKFNRRLV…KRAIELINNY (132 aa)) are I-domain. Glutamate 158 provides a ligand contact to DNA. DNA-binding residues include glycine 231 and aspartate 233. Aspartate 233 contributes to the Mg(2+) binding site. Residues 336–344 (TQVRLDSFF) are interaction with PCNA. Residues 343-388 (FFKTLPSTPSATNAAKRKAEEAKKSANNKKAKTSGGGGGGRGRRPK) are disordered.

This sequence belongs to the XPG/RAD2 endonuclease family. FEN1 subfamily. As to quaternary structure, interacts with PCNA. Three molecules of FEN1 bind to one PCNA trimer with each molecule binding to one PCNA monomer. PCNA stimulates the nuclease activity without altering cleavage specificity. It depends on Mg(2+) as a cofactor. Phosphorylated. Phosphorylation upon DNA damage induces relocalization to the nuclear plasma.

The protein resides in the nucleus. The protein localises to the nucleolus. It is found in the nucleoplasm. Its subcellular location is the mitochondrion. Functionally, structure-specific nuclease with 5'-flap endonuclease and 5'-3' exonuclease activities involved in DNA replication and repair. During DNA replication, cleaves the 5'-overhanging flap structure that is generated by displacement synthesis when DNA polymerase encounters the 5'-end of a downstream Okazaki fragment. It enters the flap from the 5'-end and then tracks to cleave the flap base, leaving a nick for ligation. Also involved in the long patch base excision repair (LP-BER) pathway, by cleaving within the apurinic/apyrimidinic (AP) site-terminated flap. Acts as a genome stabilization factor that prevents flaps from equilibrating into structures that lead to duplications and deletions. Also possesses 5'-3' exonuclease activity on nicked or gapped double-stranded DNA, and exhibits RNase H activity. Also involved in replication and repair of rDNA and in repairing mitochondrial DNA. This chain is Flap endonuclease 1, found in Drosophila ananassae (Fruit fly).